The sequence spans 278 residues: Acetyl-coenzyme A carboxylase carboxyl transferase subunit beta (278 aa).

Positions 23 to 278 (LWSKCDSCGA…QLIKLLGHMK (256 aa)) constitute a CoA carboxyltransferase N-terminal domain. Residues C27, C30, C46, and C49 each coordinate Zn(2+). The segment at 27 to 49 (CDSCGAALHKKQLEDHLYTCPHC) adopts a C4-type zinc-finger fold.

Belongs to the AccD/PCCB family. Acetyl-CoA carboxylase is a heterohexamer composed of biotin carboxyl carrier protein (AccB), biotin carboxylase (AccC) and two subunits each of ACCase subunit alpha (AccA) and ACCase subunit beta (AccD). Zn(2+) is required as a cofactor.

The protein resides in the cytoplasm. The enzyme catalyses N(6)-carboxybiotinyl-L-lysyl-[protein] + acetyl-CoA = N(6)-biotinyl-L-lysyl-[protein] + malonyl-CoA. It participates in lipid metabolism; malonyl-CoA biosynthesis; malonyl-CoA from acetyl-CoA: step 1/1. Component of the acetyl coenzyme A carboxylase (ACC) complex. Biotin carboxylase (BC) catalyzes the carboxylation of biotin on its carrier protein (BCCP) and then the CO(2) group is transferred by the transcarboxylase to acetyl-CoA to form malonyl-CoA. This Chlorobaculum tepidum (strain ATCC 49652 / DSM 12025 / NBRC 103806 / TLS) (Chlorobium tepidum) protein is Acetyl-coenzyme A carboxylase carboxyl transferase subunit beta.